The primary structure comprises 387 residues: MLPDLAEALQQRRQEGLYRFRQVLEGPQSPRVTIDGRDFLAFCSNDYLGLANHPALIEAVAAGAQRYGVGSGASHLISGHSRAHHELEEALAEFVGLPRTLLFSTGYMANMAVVTALMGREDAIFADRLNHASLNDAALLSRARFIRYPHLDLVTLEKQLKTIQARRRLIVTDAVFSMDGDRAPVAELLALCQRFDAWLLLDDAHGFGVLGEQGKGSLYDPQEVERNVPHLIYMATLGKAAGVSGAFVAAQASMIETLIQHSRTYGYTTAAAPLLAHALLTSLQLISQGVWRRERLVQLIEQLRQKLQSLPWQLLLSDTPIQPLLVGGSREAVRLDQALRERGIWVPAIRPPTVPQGMARLRISLSAAHAGEDVDQLSAALHDLAGC.

Residue Arg-19 coordinates substrate. A pyridoxal 5'-phosphate-binding site is contributed by 106–107; sequence GY. His-131 contributes to the substrate binding site. Pyridoxal 5'-phosphate is bound by residues Ser-177, His-205, and Thr-236. Lys-239 carries the post-translational modification N6-(pyridoxal phosphate)lysine. Thr-353 contributes to the substrate binding site.

Belongs to the class-II pyridoxal-phosphate-dependent aminotransferase family. BioF subfamily. Homodimer. It depends on pyridoxal 5'-phosphate as a cofactor.

It carries out the reaction 6-carboxyhexanoyl-[ACP] + L-alanine + H(+) = (8S)-8-amino-7-oxononanoate + holo-[ACP] + CO2. The protein operates within cofactor biosynthesis; biotin biosynthesis. Its function is as follows. Catalyzes the decarboxylative condensation of pimeloyl-[acyl-carrier protein] and L-alanine to produce 8-amino-7-oxononanoate (AON), [acyl-carrier protein], and carbon dioxide. The sequence is that of 8-amino-7-oxononanoate synthase from Nitrosomonas eutropha (strain DSM 101675 / C91 / Nm57).